A 1142-amino-acid polypeptide reads, in one-letter code: Probable serine/threonine-protein kinase fhkB (1142 aa).

Over residues 1-16 (MSQDIQTQNSYSDELY) the composition is skewed to polar residues. Disordered stretches follow at residues 1–359 (MSQD…RLSQ), 374–404 (NTHT…KKQQ), and 432–451 (QIIG…QPPV). Composition is skewed to low complexity over residues 17–72 (SSQI…FSQN) and 83–157 (QNSY…PSSQ). A compositionally biased stretch (polar residues) spans 158-178 (KRFFQSQNDDFVPSSQVTSLQ). Positions 186–302 (IQQQQQQQQQ…DYEQENDDDD (117 aa)) form a coiled coil. Low complexity predominate over residues 187-260 (QQQQQQQQQQ…QQTQQQQQQP (74 aa)). 2 stretches are compositionally biased toward acidic residues: residues 261-277 (QEDD…DNYE) and 283-325 (EGEE…EEES). Residues 333–348 (RALQSRSSQSRPLLRS) are compositionally biased toward low complexity. Residues 374-397 (NTHTNQLGQSSQQTNSPNVHFNSL) show a composition bias toward polar residues. Residues 393–434 (HFNSLQQKKKQQQQQQQQQQQQQQQQQQQQQQQQQQQSQQII) adopt a coiled-coil conformation. Over residues 432–443 (QIIGSQSSQSSQ) the composition is skewed to low complexity. The 72-residue stretch at 480–551 (IVVGRSSSCD…NGSYINGELI (72 aa)) folds into the FHA domain. In terms of domain architecture, Protein kinase spans 625-885 (YYFVKEIGSG…IKEALNHPWF (261 aa)). ATP is bound by residues 631 to 639 (IGSGGYGIV) and lysine 654. The Proton acceptor role is filled by aspartate 747. Residues 947–1142 (FDNNNNNNNN…HQQYTQHTTM (196 aa)) form a disordered region. Low complexity predominate over residues 949-1034 (NNNNNNNNNN…HNHNLNNHNH (86 aa)). A compositionally biased stretch (basic residues) spans 1035 to 1067 (NNNHHHNHNHNHNHNHNHNHNHNHNHNHNHNHN). Over residues 1068–1133 (NHNNNNNNNN…NNINNNNNYH (66 aa)) the composition is skewed to low complexity. A coiled-coil region spans residues 1090–1132 (NNNNNNNNNNNNNNNNNNNNYYNNNINNINNNINNNINNNNNY).

This sequence belongs to the protein kinase superfamily. CAMK Ser/Thr protein kinase family. CHK2 subfamily.

The catalysed reaction is L-seryl-[protein] + ATP = O-phospho-L-seryl-[protein] + ADP + H(+). It catalyses the reaction L-threonyl-[protein] + ATP = O-phospho-L-threonyl-[protein] + ADP + H(+). This chain is Probable serine/threonine-protein kinase fhkB (fhkB), found in Dictyostelium discoideum (Social amoeba).